We begin with the raw amino-acid sequence, 24 residues long: U1-poneritoxin-Na1a (24 aa).

Belongs to the non-disulfide-bridged peptide (NDBP) superfamily. Medium-length antimicrobial peptide (group 3) family. Ponericin-W subfamily. As to expression, expressed by the venom gland.

It is found in the secreted. Its subcellular location is the target cell membrane. Has a broad spectrum of activity against both Gram-positive and Gram-negative bacteria and S.cerevisiae. Has insecticidal and hemolytic activities. May act by disrupting the integrity of the bacterial cell membrane. This Neoponera apicalis (Ant) protein is U1-poneritoxin-Na1a.